Here is a 145-residue protein sequence, read N- to C-terminus: Ribosomal RNA large subunit methyltransferase H (145 aa).

S-adenosyl-L-methionine contacts are provided by residues leucine 64, glycine 93, and 112 to 117 (LSALTF).

This sequence belongs to the RNA methyltransferase RlmH family. As to quaternary structure, homodimer.

The protein resides in the cytoplasm. It carries out the reaction pseudouridine(1915) in 23S rRNA + S-adenosyl-L-methionine = N(3)-methylpseudouridine(1915) in 23S rRNA + S-adenosyl-L-homocysteine + H(+). Its function is as follows. Specifically methylates the pseudouridine at position 1915 (m3Psi1915) in 23S rRNA. This chain is Ribosomal RNA large subunit methyltransferase H, found in Prochlorococcus marinus (strain SARG / CCMP1375 / SS120).